Consider the following 1374-residue polypeptide: DNA-directed RNA polymerase subunit beta (1374 aa).

The protein belongs to the RNA polymerase beta chain family. As to quaternary structure, the RNAP catalytic core consists of 2 alpha, 1 beta, 1 beta' and 1 omega subunit. When a sigma factor is associated with the core the holoenzyme is formed, which can initiate transcription.

It catalyses the reaction RNA(n) + a ribonucleoside 5'-triphosphate = RNA(n+1) + diphosphate. DNA-dependent RNA polymerase catalyzes the transcription of DNA into RNA using the four ribonucleoside triphosphates as substrates. The protein is DNA-directed RNA polymerase subunit beta of Methylobacterium radiotolerans (strain ATCC 27329 / DSM 1819 / JCM 2831 / NBRC 15690 / NCIMB 10815 / 0-1).